The chain runs to 309 residues: Mitochondrial substrate carrier family protein ancA (309 aa).

Solcar repeat units lie at residues 10 to 102 (SSFV…YKKF), 114 to 203 (KFFI…AKGI), and 216 to 299 (ASWG…IQKL). The next 5 membrane-spanning stretches (helical) occupy residues 12-41 (FVKD…LLLQ), 79-103 (LANV…KKFF), 113-133 (TKFF…SLLF), 181-201 (VSVG…DTAK), and 215-235 (WASW…SYPF). ADP contacts are provided by R84 and K96. R239 provides a ligand contact to ADP. Positions 239–244 (RRRMMM) are important for transport activity. A Nucleotide carrier signature motif motif is present at residues 239–244 (RRRMMM). The helical transmembrane segment at 276–293 (ALSNAIRGSGGALVLVIY) threads the bilayer.

It belongs to the mitochondrial carrier (TC 2.A.29) family. Monomer.

It is found in the mitochondrion inner membrane. It catalyses the reaction ADP(in) + ATP(out) = ADP(out) + ATP(in). The matrix-open state (m-state) is inhibited by the membrane-permeable bongkrekic acid (BKA). The cytoplasmic-open state (c-state) is inhibited by the membrane-impermeable toxic inhibitor carboxyatractyloside (CATR). Functionally, ADP:ATP antiporter that mediates import of ADP into the mitochondrial matrix for ATP synthesis, and export of ATP out to fuel the cell. Cycles between the cytoplasmic-open state (c-state) and the matrix-open state (m-state): operates by the alternating access mechanism with a single substrate-binding site intermittently exposed to either the cytosolic (c-state) or matrix (m-state) side of the inner mitochondrial membrane. The protein is Mitochondrial substrate carrier family protein ancA (ancA) of Dictyostelium discoideum (Social amoeba).